The chain runs to 190 residues: Early nodulin-like protein 12 (190 aa).

Positions 1–21 are cleaved as a signal peptide; it reads MGIIVPVLTLVFLLFAKVSHG. Positions 26–130 constitute a Phytocyanin domain; that stretch reads RVILVGGSVG…GEKITLVVLA (105 aa). N-linked (GlcNAc...) asparagine glycosylation is present at asparagine 44. A disulfide bond links cysteine 84 and cysteine 118. A disordered region spans residues 135-164; it reads GGGSSSGDAPKVSPVSPTAQTPAPAPGPAA. Low complexity predominate over residues 151–164; sequence PTAQTPAPAPGPAA. Asparagine 167 carries GPI-anchor amidated asparagine lipidation. Positions 168-190 are cleaved as a propeptide — removed in mature form; that stretch reads AAVGLKVASGWFLTAVVVGLAMA.

It belongs to the early nodulin-like (ENODL) family. Confined to flowers and siliques. Expressed in female gametophytes.

The protein localises to the cell membrane. In terms of biological role, may act as a carbohydrate transporter. Required, together with ENODL11, ENODL12, ENODL13, ENODL14 and ENODL15, for male-female communication and pollen tube reception and burst at the synergid cell surface of the female gametophyte. The protein is Early nodulin-like protein 12 of Arabidopsis thaliana (Mouse-ear cress).